We begin with the raw amino-acid sequence, 208 residues long: Large ribosomal subunit protein uL3 (208 aa).

Residues 116-148 form a disordered region; sequence GFQGVIKRHGQSRGPMAHGSRYHRRPGSMGPVA.

It belongs to the universal ribosomal protein uL3 family. In terms of assembly, part of the 50S ribosomal subunit. Forms a cluster with proteins L14 and L19.

Functionally, one of the primary rRNA binding proteins, it binds directly near the 3'-end of the 23S rRNA, where it nucleates assembly of the 50S subunit. The chain is Large ribosomal subunit protein uL3 from Streptococcus pyogenes serotype M12 (strain MGAS2096).